We begin with the raw amino-acid sequence, 114 residues long: Ribosome-binding factor A (114 aa).

Belongs to the RbfA family. In terms of assembly, monomer. Binds 30S ribosomal subunits, but not 50S ribosomal subunits or 70S ribosomes.

The protein localises to the cytoplasm. In terms of biological role, one of several proteins that assist in the late maturation steps of the functional core of the 30S ribosomal subunit. Associates with free 30S ribosomal subunits (but not with 30S subunits that are part of 70S ribosomes or polysomes). Required for efficient processing of 16S rRNA. May interact with the 5'-terminal helix region of 16S rRNA. In Listeria monocytogenes serotype 4b (strain F2365), this protein is Ribosome-binding factor A.